We begin with the raw amino-acid sequence, 446 residues long: Histidine--tRNA ligase (446 aa).

This sequence belongs to the class-II aminoacyl-tRNA synthetase family. In terms of assembly, homodimer.

The protein localises to the cytoplasm. It carries out the reaction tRNA(His) + L-histidine + ATP = L-histidyl-tRNA(His) + AMP + diphosphate + H(+). The protein is Histidine--tRNA ligase of Paraburkholderia phytofirmans (strain DSM 17436 / LMG 22146 / PsJN) (Burkholderia phytofirmans).